The chain runs to 146 residues: Large ribosomal subunit protein uL15 (146 aa).

A disordered region spans residues 1–46 (MKLHELQPAPGSRKKAVRVGRGIGSGNGKTAGRGHKGQKARSGGGV). Gly residues predominate over residues 21-31 (RGIGSGNGKTA).

The protein belongs to the universal ribosomal protein uL15 family. Part of the 50S ribosomal subunit.

Functionally, binds to the 23S rRNA. This Geobacillus thermodenitrificans (strain NG80-2) protein is Large ribosomal subunit protein uL15.